The sequence spans 753 residues: Replication restart protein PriA (753 aa).

In terms of domain architecture, Helicase ATP-binding spans 228 to 395; that stretch reads SLITTKFQTC…LSKKYTLSVL (168 aa). 241–248 contributes to the ATP binding site; that stretch reads GVTGSGKT. The short motif at 337 to 340 is the DEAH box element; that stretch reads DEEH. Cys-458, Cys-461, Cys-467, Cys-470, Cys-485, Cys-488, Cys-499, and Cys-502 together coordinate Zn(2+). The 156-residue stretch at 491–646 folds into the Helicase C-terminal domain; that stretch reads RLSKPITSCP…DFPAFYKEEI (156 aa).

This sequence belongs to the helicase family. PriA subfamily. In terms of assembly, component of the replication restart primosome. Zn(2+) is required as a cofactor.

It catalyses the reaction Couples ATP hydrolysis with the unwinding of duplex DNA by translocating in the 3'-5' direction.. It carries out the reaction ATP + H2O = ADP + phosphate + H(+). In terms of biological role, initiates the restart of stalled replication forks, which reloads the replicative helicase on sites other than the origin of replication. Recognizes and binds to abandoned replication forks and remodels them to uncover a helicase loading site. Promotes assembly of the primosome at these replication forks. This Chlamydia muridarum (strain MoPn / Nigg) protein is Replication restart protein PriA.